The chain runs to 321 residues: Phosphopantothenate--cysteine ligase 1 (321 aa).

Belongs to the PPC synthetase family. In terms of assembly, homodimer.

The enzyme catalyses (R)-4'-phosphopantothenate + L-cysteine + CTP = N-[(R)-4-phosphopantothenoyl]-L-cysteine + CMP + diphosphate + H(+). Its pathway is cofactor biosynthesis; coenzyme A biosynthesis; CoA from (R)-pantothenate: step 2/5. In terms of biological role, catalyzes the first step in the biosynthesis of coenzyme A from vitamin B5, where cysteine is conjugated to 4'-phosphopantothenate to form 4-phosphopantothenoylcysteine. This is Phosphopantothenate--cysteine ligase 1 from Oryza sativa subsp. japonica (Rice).